Consider the following 280-residue polypeptide: Transmembrane protein 119 (280 aa).

The signal sequence occupies residues 1-20 (MVPWFLLSLLLLARPVPGVA). At 21–91 (YSVSLPASFL…IMDFFRQYVM (71 aa)) the chain is on the extracellular side. An O-linked (Xyl...) (chondroitin sulfate) serine glycan is attached at Ser-36. Low complexity predominate over residues 38 to 47 (EAEGSSASSP). Residues 38 to 73 (EAEGSSASSPSLPPPGTPAFSPTPERPQPTALDGPV) form a disordered region. A helical membrane pass occupies residues 92-112 (LIAVVGSLTFLIMFIVCAALI). The Cytoplasmic portion of the chain corresponds to 113-280 (TRQKHKATAY…CACNRVSPSV (168 aa)). 2 disordered regions span residues 133-162 (VDQR…EGLD) and 181-280 (PARA…SPSV). Over residues 148–162 (VPDRAPDSRHEEGLD) the composition is skewed to basic and acidic residues. Ser-269 is modified (phosphoserine).

Interacts with SMAD1, SMAD5 and RUNX2. In terms of tissue distribution, expressed in spermatocytes and spermatids in the developing testis (at protein level). Expressed in the brain, heart, lung, spleen, skeletal muscle, ovary, testis and epididymis. Predominantly expressed in osteoblasts.

The protein resides in the cell membrane. The protein localises to the cytoplasm. Its subcellular location is the endoplasmic reticulum membrane. It localises to the secreted. Its function is as follows. Plays an important role in bone formation and normal bone mineralization. Promotes the differentiation of myoblasts into osteoblasts. May induce the commitment and differentiation of myoblasts into osteoblasts through an enhancement of BMP2 production and interaction with the BMP-RUNX2 pathway. Up-regulates the expression of ATF4 which plays a central role in osteoblast differentiation. Essential for normal spermatogenesis and late testicular differentiation. This is Transmembrane protein 119 (Tmem119) from Mus musculus (Mouse).